Here is a 520-residue protein sequence, read N- to C-terminus: Cyclin-L2 (520 aa).

Cyclin-like stretches follow at residues 81-183 (ELIQ…RVLK) and 196-280 (KIIV…KILQ). Positions 309–520 (RAKGLLPPGS…DHPGHSRHRR (212 aa)) are disordered. Phosphoserine occurs at positions 330, 337, 347, and 350. Over residues 356-366 (RKMEGPKKAKG) the composition is skewed to basic and acidic residues. Ser368 is modified (phosphoserine). Residues 384 to 422 (RSREQSYSRSPSRSASPKRRKSDSGSTSGGSKSQSRSRS) form an RS region. Over residues 407 to 429 (SGSTSGGSKSQSRSRSRSDSPPR) the composition is skewed to low complexity. Residues 440-453 (SEVRGSRKSKDCKH) show a composition bias toward basic and acidic residues. Over residues 454–471 (LTQKPHKSRSRSSSRSRS) the composition is skewed to basic residues. Basic and acidic residues-rich tracts occupy residues 472 to 481 (RSRERTDSSG) and 489 to 514 (YYRDQRRERSRSYERTGHRYERDHPG).

This sequence belongs to the cyclin family. Cyclin L subfamily. As to quaternary structure, interacts with CDK11A, CDK11B, CDK12, CDK13 and POLR2A, the hyperphosphorylated C-terminal domain (CTD) of RNA polymerase II. May form a ternary complex with CDK11B and casein kinase II (CKII). Interacts with pre-mRNA-splicing factors, including at least SRSF1, SRSF2 and SRSF7/SLU7.

The protein localises to the nucleus speckle. Its subcellular location is the nucleus. It localises to the nucleoplasm. Involved in pre-mRNA splicing. May induce cell death, possibly by acting on the transcription and RNA processing of apoptosis-related factors. The sequence is that of Cyclin-L2 (Ccnl2) from Rattus norvegicus (Rat).